Here is a 323-residue protein sequence, read N- to C-terminus: tRNA U34 carboxymethyltransferase (323 aa).

Carboxy-S-adenosyl-L-methionine is bound by residues lysine 91, tryptophan 105, lysine 110, glycine 130, 152-154, 181-182, methionine 196, tyrosine 200, and arginine 315; these read DPT and IE.

Belongs to the class I-like SAM-binding methyltransferase superfamily. CmoB family. As to quaternary structure, homotetramer.

The catalysed reaction is carboxy-S-adenosyl-L-methionine + 5-hydroxyuridine(34) in tRNA = 5-carboxymethoxyuridine(34) in tRNA + S-adenosyl-L-homocysteine + H(+). Its function is as follows. Catalyzes carboxymethyl transfer from carboxy-S-adenosyl-L-methionine (Cx-SAM) to 5-hydroxyuridine (ho5U) to form 5-carboxymethoxyuridine (cmo5U) at position 34 in tRNAs. The protein is tRNA U34 carboxymethyltransferase of Escherichia coli O139:H28 (strain E24377A / ETEC).